Reading from the N-terminus, the 252-residue chain is 3-deoxy-manno-octulosonate cytidylyltransferase (252 aa).

This sequence belongs to the KdsB family.

Its subcellular location is the cytoplasm. The catalysed reaction is 3-deoxy-alpha-D-manno-oct-2-ulosonate + CTP = CMP-3-deoxy-beta-D-manno-octulosonate + diphosphate. It participates in nucleotide-sugar biosynthesis; CMP-3-deoxy-D-manno-octulosonate biosynthesis; CMP-3-deoxy-D-manno-octulosonate from 3-deoxy-D-manno-octulosonate and CTP: step 1/1. Its pathway is bacterial outer membrane biogenesis; lipopolysaccharide biosynthesis. In terms of biological role, activates KDO (a required 8-carbon sugar) for incorporation into bacterial lipopolysaccharide in Gram-negative bacteria. The sequence is that of 3-deoxy-manno-octulosonate cytidylyltransferase from Nitratidesulfovibrio vulgaris (strain DP4) (Desulfovibrio vulgaris).